The sequence spans 132 residues: Large ribosomal subunit protein uL22c (132 aa).

This sequence belongs to the universal ribosomal protein uL22 family. As to quaternary structure, part of the 50S ribosomal subunit.

The protein resides in the plastid. Its subcellular location is the chloroplast. This protein binds specifically to 23S rRNA. Functionally, the globular domain of the protein is located near the polypeptide exit tunnel on the outside of the subunit, while an extended beta-hairpin is found that lines the wall of the exit tunnel in the center of the 70S ribosome. The protein is Large ribosomal subunit protein uL22c (rpl22) of Staurastrum punctulatum (Green alga).